We begin with the raw amino-acid sequence, 487 residues long: Serine/threonine-protein kinase 4 (487 aa).

Methionine 1 carries the N-acetylmethionine modification. Phosphothreonine is present on threonine 3. Residues 30–281 (FDVLEKLGEG…ATQLLQHPFV (252 aa)) enclose the Protein kinase domain. Residues 36 to 44 (LGEGSYGSV) and lysine 59 contribute to the ATP site. The active-site Proton acceptor is aspartate 149. At threonine 183 the chain carries Phosphothreonine; by autocatalysis. Serine 265 bears the Phosphoserine mark. Residues 290 to 310 (LRDLINEAMDVKLKRQEAQQR) are a coiled coil. The interval 305–338 (QEAQQREVDQDDEENSEEDELDSGTMVRAVGDDM) is disordered. Residues 313–326 (DQDDEENSEEDELD) are compositionally biased toward acidic residues. Serine 320 bears the Phosphoserine mark. Residues threonine 340 and threonine 367 each carry the phosphothreonine modification. Threonine 387 bears the Phosphothreonine; by PKB/AKT1 mark. Residues serine 410 and serine 414 each carry the phosphoserine modification. At tyrosine 433 the chain carries Phosphotyrosine. Residues 433-480 (YEFLKSWTVEDLQKRLLALDPMMEQEIEEIRQKYQSKRQPILDAIEAK) enclose the SARAH domain.

Belongs to the protein kinase superfamily. STE Ser/Thr protein kinase family. STE20 subfamily. As to quaternary structure, homodimer; mediated via the coiled-coil region. Interacts with NORE1, which inhibits autoactivation. Interacts with and stabilizes SAV1. Interacts with RASSF1. Interacts with FOXO3. Interacts with RASSF2 (via SARAH domain). Interacts with AR, PKB/AKT1, TNNI3 and SIRT1. Interacts with DLG5 (via PDZ domain 3). Interacts with MARK3 and SCRIB in the presence of DLG5. Mg(2+) is required as a cofactor. Autophosphorylated on serine and threonine residues. Phosphorylation at Thr-387 by PKB/AKT1, leads to inhibition of its: kinase activity, nuclear translocation and autophosphorylation at Thr-183. It also diminishes its cleavage by caspases and its ability to phosphorylate FOXO3. Post-translationally, proteolytically cleaved by caspase-3 during apoptosis at Asp-326 and Asp-349 resulting in a 37 kDa or a 39 kDa subunit respectively. The 39 kDa subunit is further cleaved into the 37 kDa form. Proteolytic cleavage results in kinase activation and nuclear translocation of the truncated form (MST1/N). It is less likely that cleavage at Asp-349 is a prerequisite for activation as this site is not conserved in the murine ortholog.

It is found in the cytoplasm. The protein resides in the nucleus. It catalyses the reaction L-seryl-[protein] + ATP = O-phospho-L-seryl-[protein] + ADP + H(+). The catalysed reaction is L-threonyl-[protein] + ATP = O-phospho-L-threonyl-[protein] + ADP + H(+). Inhibited by the C-terminal non-catalytic region. Activated by caspase-cleavage. Full activation also requires homodimerization and autophosphorylation of Thr-183. Activated by RASSF1 which acts by preventing its dephosphorylation. Functionally, stress-activated, pro-apoptotic kinase which, following caspase-cleavage, enters the nucleus and induces chromatin condensation followed by internucleosomal DNA fragmentation. Key component of the Hippo signaling pathway which plays a pivotal role in organ size control and tumor suppression by restricting proliferation and promoting apoptosis. The core of this pathway is composed of a kinase cascade wherein STK3/MST2 and STK4/MST1, in complex with its regulatory protein SAV1, phosphorylates and activates LATS1/2 in complex with its regulatory protein MOB1, which in turn phosphorylates and inactivates YAP1 oncoprotein and WWTR1/TAZ. Phosphorylation of YAP1 by LATS2 inhibits its translocation into the nucleus to regulate cellular genes important for cell proliferation, cell death, and cell migration. STK3/MST2 and STK4/MST1 are required to repress proliferation of mature hepatocytes, to prevent activation of facultative adult liver stem cells (oval cells), and to inhibit tumor formation. Phosphorylates 'Ser-14' of histone H2B (H2BS14ph) during apoptosis. Phosphorylates FOXO3 upon oxidative stress, which results in its nuclear translocation and cell death initiation. Phosphorylates MOBKL1A, MOBKL1B and RASSF2. Phosphorylates TNNI3 (cardiac Tn-I) and alters its binding affinity to TNNC1 (cardiac Tn-C) and TNNT2 (cardiac Tn-T). Phosphorylates FOXO1 on 'Ser-212' and regulates its activation and stimulates transcription of PMAIP1 in a FOXO1-dependent manner. Phosphorylates SIRT1 and inhibits SIRT1-mediated p53/TP53 deacetylation, thereby promoting p53/TP53 dependent transcription and apoptosis upon DNA damage. Acts as an inhibitor of PKB/AKT1. Phosphorylates AR on 'Ser-650' and suppresses its activity by intersecting with PKB/AKT1 signaling and antagonizing formation of AR-chromatin complexes. The protein is Serine/threonine-protein kinase 4 (STK4) of Lemur catta (Ring-tailed lemur).